Reading from the N-terminus, the 82-residue chain is Exodeoxyribonuclease 7 small subunit (82 aa).

This sequence belongs to the XseB family. Heterooligomer composed of large and small subunits.

Its subcellular location is the cytoplasm. It catalyses the reaction Exonucleolytic cleavage in either 5'- to 3'- or 3'- to 5'-direction to yield nucleoside 5'-phosphates.. Its function is as follows. Bidirectionally degrades single-stranded DNA into large acid-insoluble oligonucleotides, which are then degraded further into small acid-soluble oligonucleotides. This is Exodeoxyribonuclease 7 small subunit from Coxiella burnetii (strain CbuG_Q212) (Coxiella burnetii (strain Q212)).